We begin with the raw amino-acid sequence, 392 residues long: Protein trapped in endoderm-1 (392 aa).

The Extracellular portion of the chain corresponds to methionine 1 to alanine 39. The chain crosses the membrane as a helical span at residues isoleucine 40 to leucine 60. Residues leucine 61–alanine 73 are Cytoplasmic-facing. The chain crosses the membrane as a helical span at residues phenylalanine 74–alanine 94. Topologically, residues valine 95–lysine 110 are extracellular. The chain crosses the membrane as a helical span at residues isoleucine 111–threonine 131. Residues leucine 132–glutamine 156 lie on the Cytoplasmic side of the membrane. The chain crosses the membrane as a helical span at residues leucine 157–glycine 177. Residues glutamate 178 to leucine 202 are Extracellular-facing. A helical transmembrane segment spans residues phenylalanine 203–isoleucine 223. The Cytoplasmic segment spans residues threonine 224 to arginine 268. A helical transmembrane segment spans residues leucine 269–leucine 289. Over alanine 290–proline 302 the chain is Extracellular. Asparagine 298 is a glycosylation site (N-linked (GlcNAc...) asparagine). A helical membrane pass occupies residues tryptophan 303–tyrosine 323. Topologically, residues alanine 324–valine 392 are cytoplasmic. Serine 359, serine 362, and serine 366 each carry phosphoserine. Residue threonine 372 is modified to Phosphothreonine.

It belongs to the G-protein coupled receptor 1 family. In terms of tissue distribution, in embryos, expression is seen at highest levels in the cuprophilic cells and at lower levels in the amnioserosa, developing CNS, cardiac mesoderm primordium and midline glia.

It localises to the cell membrane. Functionally, essential for the first active step of germ cell migration: transepithelial migration of germ cells through the posterior midgut (PMG) epithelium. The chain is Protein trapped in endoderm-1 (Tre1) from Drosophila melanogaster (Fruit fly).